Consider the following 318-residue polypeptide: Protein W (318 aa).

2 disordered regions span residues 1–23 and 38–318; these read MDQD…GGRE and SEPT…KKGA. Residues 7–20 show a composition bias toward basic and acidic residues; sequence ILKEDSEVEREAPG. The segment covering 50–59 has biased composition (polar residues); the sequence is LHNTINTPQG. Ser-68 carries the post-translational modification Phosphoserine; by host. Residues 83–101 show a composition bias toward basic and acidic residues; that stretch reads RSGEESRVSGRTSKPEAEA. Ser-125 carries the post-translational modification Phosphoserine; by host. Over residues 150 to 168 the composition is skewed to basic and acidic residues; it reads GIEDENREMAAHPDKRGED. Positions 191-206 are enriched in polar residues; sequence ASNNGRSMEPGSSHSA. Phosphoserine; by host is present on residues Ser-192, Ser-249, Ser-257, and Ser-260.

The polypeptide is Protein W (P/V/C) (Sendai virus (strain Fushimi) (SeV)).